The primary structure comprises 310 residues: Ribosomal RNA large subunit methyltransferase F (310 aa).

It belongs to the methyltransferase superfamily. METTL16/RlmF family.

It is found in the cytoplasm. The enzyme catalyses adenosine(1618) in 23S rRNA + S-adenosyl-L-methionine = N(6)-methyladenosine(1618) in 23S rRNA + S-adenosyl-L-homocysteine + H(+). Its function is as follows. Specifically methylates the adenine in position 1618 of 23S rRNA. The protein is Ribosomal RNA large subunit methyltransferase F of Psychromonas ingrahamii (strain DSM 17664 / CCUG 51855 / 37).